The chain runs to 225 residues: Protein-L-isoaspartate O-methyltransferase (225 aa).

Residue Ser75 is part of the active site.

This sequence belongs to the methyltransferase superfamily. L-isoaspartyl/D-aspartyl protein methyltransferase family.

The protein resides in the cytoplasm. It catalyses the reaction [protein]-L-isoaspartate + S-adenosyl-L-methionine = [protein]-L-isoaspartate alpha-methyl ester + S-adenosyl-L-homocysteine. Catalyzes the methyl esterification of L-isoaspartyl residues in peptides and proteins that result from spontaneous decomposition of normal L-aspartyl and L-asparaginyl residues. It plays a role in the repair and/or degradation of damaged proteins. The polypeptide is Protein-L-isoaspartate O-methyltransferase (Xylella fastidiosa (strain M23)).